The sequence spans 185 residues: Intraflagellar transport protein 22 homolog (185 aa).

Residues Gly-10–Thr-17, Asp-63–Asp-67, and His-123–Gly-126 contribute to the GTP site. Phosphoserine is present on Ser-137.

It belongs to the small GTPase superfamily. Rab family. In terms of assembly, component of the IFT complex B, at least composed of IFT20, IFT22, IFT25, IFT27, IFT46, IFT52, TRAF3IP1/IFT54, IFT57, IFT74, IFT80, IFT81, and IFT88. Interacts with IFT88. Interacts with CFAP61.

Its subcellular location is the cell projection. It localises to the cilium. Its function is as follows. Small GTPase-like component of the intraflagellar transport (IFT) complex B. The sequence is that of Intraflagellar transport protein 22 homolog (Ift22) from Mus musculus (Mouse).